Here is a 331-residue protein sequence, read N- to C-terminus: MSAEYDLTIIGGGPVGMFAAFYAGMRNARVQLLESLPELGGQVQALYPEKIIHDVAGYPAIKGRELVAQLEKQLTQFPIDIQLASPVTDVTGAMGDFTITTASGQQSHSKAIIVATGSGAFEPRRLAVDNAAEFENKQLFYHIPSVKQFADRTVLVAGGGDSAIDMALMLEPVAKHVYIMHRRDRFRGMEHNVDLLKASSVEIKTPFLIKQLAETATGQLQLTMKEVRGTTEETLAVDDLIVNYGFIADNKVIRNWHVTPTMAHRLITVDTEMNTDVPGIAAIGDTVTYAGKLGLIASGFGEAPNAVNQLMMTLYPERRSPLHSTTVFEKM.

Glu34, Gln42, Tyr47, Val87, Phe121, Asp285, and Thr325 together coordinate FAD.

This sequence belongs to the ferredoxin--NADP reductase type 2 family. In terms of assembly, homodimer. Requires FAD as cofactor.

It catalyses the reaction 2 reduced [2Fe-2S]-[ferredoxin] + NADP(+) + H(+) = 2 oxidized [2Fe-2S]-[ferredoxin] + NADPH. This Lactiplantibacillus plantarum (strain ATCC BAA-793 / NCIMB 8826 / WCFS1) (Lactobacillus plantarum) protein is Ferredoxin--NADP reductase.